The sequence spans 275 residues: Exosome complex component Rrp42 (275 aa).

It belongs to the RNase PH family. Rrp42 subfamily. Component of the archaeal exosome complex. Forms a hexameric ring-like arrangement composed of 3 Rrp41-Rrp42 heterodimers. The hexameric ring associates with a trimer of Rrp4 and/or Csl4 subunits.

The protein localises to the cytoplasm. Its function is as follows. Non-catalytic component of the exosome, which is a complex involved in RNA degradation. Contributes to the structuring of the Rrp41 active site. The protein is Exosome complex component Rrp42 of Saccharolobus islandicus (strain L.S.2.15 / Lassen #1) (Sulfolobus islandicus).